A 486-amino-acid chain; its full sequence is Outer dynein arm-docking complex subunit 4 (486 aa).

3 TPR repeats span residues F14–D47, N49–Y81, and F82–L115. Residues G153 to T180 are disordered. TPR repeat units follow at residues G314–C347, S354–G387, A391–I424, and L431–L464.

As to quaternary structure, component of the outer dynein arm-docking complex along with ODAD1, ODAD2 and ODAD3.

Its subcellular location is the cytoplasm. It is found in the cytoskeleton. The protein localises to the cilium axoneme. Component of the outer dynein arm-docking complex (ODA-DC) that mediates outer dynein arms (ODA) binding onto the doublet microtubule. Plays an essential role for the assembly of ODA-DC and in the docking of ODA in ciliary axoneme. The chain is Outer dynein arm-docking complex subunit 4 (odad4) from Danio rerio (Zebrafish).